The sequence spans 337 residues: 4-hydroxyproline 2-epimerase 2 (337 aa).

Residue cysteine 90 is the Proton acceptor of the active site. Substrate is bound by residues 91–92 (GH), histidine 223, and aspartate 249. The active-site Proton donor is the cysteine 253. 254-255 (GT) lines the substrate pocket.

It belongs to the proline racemase family.

The catalysed reaction is trans-4-hydroxy-L-proline = cis-4-hydroxy-D-proline. Catalyzes the epimerization of trans-4-hydroxy-L-proline (t4LHyp) to cis-4-hydroxy-D-proline (c4DHyp). Is likely involved in a degradation pathway that converts t4LHyp to alpha-ketoglutarate. Can also catalyze the epimerization of trans-3-hydroxy-L-proline (t3LHyp) to cis-3-hydroxy-D-proline (c3DHyp), albeit with 170-fold lower efficiency. Displays no proline racemase activity. This is 4-hydroxyproline 2-epimerase 2 from Brucella anthropi (strain ATCC 49188 / DSM 6882 / CCUG 24695 / JCM 21032 / LMG 3331 / NBRC 15819 / NCTC 12168 / Alc 37) (Ochrobactrum anthropi).